The following is a 226-amino-acid chain: 26S proteasome non-ATPase regulatory subunit 10 (226 aa).

The required for nuclear localization stretch occupies residues 1–37; it reads MEGCVSNLMVCNLAYSGKLEELKESILADKSLATRTD. Positions 1–71 are interaction with RB1; it reads MEGCVSNLMV…LGVPVNDKDD (71 aa). ANK repeat units lie at residues 3–36, 37–69, 70–102, 103–135, 136–168, 169–201, and 202–226; these read GCVS…ATRT, DQDS…VNDK, DDAG…VNAV, NQNG…PDAK, DHYE…TNIQ, DTEG…IYIE, and NKEE…MVEG. Residues 39–226 are interaction with RELA; that stretch reads DSRTALHWAC…GLILKRMVEG (188 aa). The segment at 171–226 is interaction with RB1; the sequence is EGNTPLHLACDEERVEEAKLLVSQGASIYIENKEEKTPLQVAKGGLGLILKRMVEG.

In terms of assembly, part of transient complex containing PSMD10, PSMC4, PSMC5 and PAAF1 formed during the assembly of the 26S proteasome. Stays associated throughout the assembly of the PA700/19S RC and is released upon association with the 20S core. Interacts with PSMC4. Interacts with RB1. Interacts with CDK4. Interacts with MDM2. Interacts with RELA. Associates with a CDK4:CCND2 serine/threonine kinase complex. Interacts with ARHGDIA and increases the interaction between ARHGDIA and RHOA, hence promotes ARHGDIA inactivation of RHOA and ROCK. In terms of tissue distribution, tends to be up-regulated in cancer cells with RAS mutations, including lung cancers and adenocarconimas (at protein level).

It is found in the cytoplasm. The protein localises to the nucleus. Functionally, acts as a chaperone during the assembly of the 26S proteasome, specifically of the PA700/19S regulatory complex (RC). In the initial step of the base subcomplex assembly is part of an intermediate PSMD10:PSMC4:PSMC5:PAAF1 module which probably assembles with a PSMD5:PSMC2:PSMC1:PSMD2 module. Independently of the proteasome, regulates EGF-induced AKT activation through inhibition of the RHOA/ROCK/PTEN pathway, leading to prolonged AKT activation. Plays an important role in RAS-induced tumorigenesis. In terms of biological role, acts as an proto-oncoprotein by being involved in negative regulation of tumor suppressors RB1 and p53/TP53. Overexpression is leading to phosphorylation of RB1 and proteasomal degradation of RB1. Regulates CDK4-mediated phosphorylation of RB1 by competing with CDKN2A for binding with CDK4. Facilitates binding of MDM2 to p53/TP53 and the mono- and polyubiquitination of p53/TP53 by MDM2 suggesting a function in targeting the TP53:MDM2 complex to the 26S proteasome. Involved in p53-independent apoptosis. Involved in regulation of NF-kappa-B by retaining it in the cytoplasm. Binds to the NF-kappa-B component RELA and accelerates its XPO1/CRM1-mediated nuclear export. The protein is 26S proteasome non-ATPase regulatory subunit 10 (PSMD10) of Homo sapiens (Human).